The sequence spans 198 residues: Recombination protein RecR (198 aa).

The segment at 57 to 72 adopts a C4-type zinc-finger fold; it reads CSVCGHITEEDPCYIC. The 96-residue stretch at 80–175 folds into the Toprim domain; it reads SVICVVEDDK…KVTRLAQGLS (96 aa).

This sequence belongs to the RecR family.

Functionally, may play a role in DNA repair. It seems to be involved in an RecBC-independent recombinational process of DNA repair. It may act with RecF and RecO. This Staphylococcus carnosus (strain TM300) protein is Recombination protein RecR.